The sequence spans 320 residues: Ribosomal protein L11 methyltransferase (320 aa).

4 residues coordinate S-adenosyl-L-methionine: T165, G186, D208, and N251.

Belongs to the methyltransferase superfamily. PrmA family.

Its subcellular location is the cytoplasm. The enzyme catalyses L-lysyl-[protein] + 3 S-adenosyl-L-methionine = N(6),N(6),N(6)-trimethyl-L-lysyl-[protein] + 3 S-adenosyl-L-homocysteine + 3 H(+). Its function is as follows. Methylates ribosomal protein L11. This Limosilactobacillus fermentum (strain NBRC 3956 / LMG 18251) (Lactobacillus fermentum) protein is Ribosomal protein L11 methyltransferase.